Here is a 188-residue protein sequence, read N- to C-terminus: Cell division protein SepF (188 aa).

This sequence belongs to the SepF family. In terms of assembly, homodimer. Interacts with FtsZ.

It localises to the cytoplasm. Cell division protein that is part of the divisome complex and is recruited early to the Z-ring. Probably stimulates Z-ring formation, perhaps through the cross-linking of FtsZ protofilaments. Its function overlaps with FtsA. The chain is Cell division protein SepF from Synechococcus sp. (strain CC9605).